The primary structure comprises 37 residues: Non-specific lipid-transfer protein P4 (37 aa).

It belongs to the plant LTP family.

It is found in the secreted. In terms of biological role, plant non-specific lipid-transfer proteins transfer phospholipids as well as galactolipids across membranes. May play a role in wax or cutin deposition in the cell walls of expanding epidermal cells and certain secretory tissues. The polypeptide is Non-specific lipid-transfer protein P4 (Vitis sp. (Grape)).